The primary structure comprises 89 residues: Small ribosomal subunit protein bS20 (89 aa).

It belongs to the bacterial ribosomal protein bS20 family.

Functionally, binds directly to 16S ribosomal RNA. This Hahella chejuensis (strain KCTC 2396) protein is Small ribosomal subunit protein bS20.